The following is a 221-amino-acid chain: 2,3-bisphosphoglycerate-dependent phosphoglycerate mutase (221 aa).

Substrate-binding positions include 8–15 (RHGNSLWN), 21–22 (TG), Arg-60, 87–90 (ERHY), Lys-98, 114–115 (RR), and 174–175 (GN). Residue His-9 is the Tele-phosphohistidine intermediate of the active site. The Proton donor/acceptor role is filled by Glu-87. Positions 114-140 (RRGYDTPPPPLHSQADDPRYEEPPPLS) are disordered.

The protein belongs to the phosphoglycerate mutase family. BPG-dependent PGAM subfamily.

The catalysed reaction is (2R)-2-phosphoglycerate = (2R)-3-phosphoglycerate. Its pathway is carbohydrate degradation; glycolysis; pyruvate from D-glyceraldehyde 3-phosphate: step 3/5. Functionally, catalyzes the interconversion of 2-phosphoglycerate and 3-phosphoglycerate. This chain is 2,3-bisphosphoglycerate-dependent phosphoglycerate mutase, found in Tropheryma whipplei (strain TW08/27) (Whipple's bacillus).